The primary structure comprises 103 residues: Large ribosomal subunit protein uL24 (103 aa).

The protein belongs to the universal ribosomal protein uL24 family. Part of the 50S ribosomal subunit.

In terms of biological role, one of two assembly initiator proteins, it binds directly to the 5'-end of the 23S rRNA, where it nucleates assembly of the 50S subunit. Its function is as follows. One of the proteins that surrounds the polypeptide exit tunnel on the outside of the subunit. The protein is Large ribosomal subunit protein uL24 of Listeria innocua serovar 6a (strain ATCC BAA-680 / CLIP 11262).